The following is a 422-amino-acid chain: Lactose-binding protein (422 aa).

The first 28 residues, 1 to 28, serve as a signal peptide directing secretion; it reads MDYSRLLKRSVSAALTAAALLCSTAAFA. Positions 246–277 are lactose-binding; that stretch reads SNDGIRALTSGDVASVLRGVWITGTVKSQPDQ.

This sequence belongs to the bacterial solute-binding protein 1 family.

It localises to the periplasm. Its function is as follows. Part of the binding-protein-dependent transport system for lactose. The chain is Lactose-binding protein (lacE) from Rhizobium radiobacter (Agrobacterium tumefaciens).